A 353-amino-acid chain; its full sequence is Holliday junction branch migration complex subunit RuvB (353 aa).

Positions 1-183 (MSGEGLVSAA…FGFTAHMDFY (183 aa)) are large ATPase domain (RuvB-L). ATP contacts are provided by residues L22, R23, G64, K67, T68, S69, 130-132 (EDF), R173, Y183, and R220. T68 is a Mg(2+) binding site. Residues 184-254 (DAAELALVLT…VARAALRIYD (71 aa)) are small ATPAse domain (RuvB-S). The head domain (RuvB-H) stretch occupies residues 257–353 (ALGLDRLDRA…ALFGEDLPAS (97 aa)). Positions 312 and 317 each coordinate DNA.

Belongs to the RuvB family. Homohexamer. Forms an RuvA(8)-RuvB(12)-Holliday junction (HJ) complex. HJ DNA is sandwiched between 2 RuvA tetramers; dsDNA enters through RuvA and exits via RuvB. An RuvB hexamer assembles on each DNA strand where it exits the tetramer. Each RuvB hexamer is contacted by two RuvA subunits (via domain III) on 2 adjacent RuvB subunits; this complex drives branch migration. In the full resolvosome a probable DNA-RuvA(4)-RuvB(12)-RuvC(2) complex forms which resolves the HJ.

The protein resides in the cytoplasm. It catalyses the reaction ATP + H2O = ADP + phosphate + H(+). Functionally, the RuvA-RuvB-RuvC complex processes Holliday junction (HJ) DNA during genetic recombination and DNA repair, while the RuvA-RuvB complex plays an important role in the rescue of blocked DNA replication forks via replication fork reversal (RFR). RuvA specifically binds to HJ cruciform DNA, conferring on it an open structure. The RuvB hexamer acts as an ATP-dependent pump, pulling dsDNA into and through the RuvAB complex. RuvB forms 2 homohexamers on either side of HJ DNA bound by 1 or 2 RuvA tetramers; 4 subunits per hexamer contact DNA at a time. Coordinated motions by a converter formed by DNA-disengaged RuvB subunits stimulates ATP hydrolysis and nucleotide exchange. Immobilization of the converter enables RuvB to convert the ATP-contained energy into a lever motion, pulling 2 nucleotides of DNA out of the RuvA tetramer per ATP hydrolyzed, thus driving DNA branch migration. The RuvB motors rotate together with the DNA substrate, which together with the progressing nucleotide cycle form the mechanistic basis for DNA recombination by continuous HJ branch migration. Branch migration allows RuvC to scan DNA until it finds its consensus sequence, where it cleaves and resolves cruciform DNA. This chain is Holliday junction branch migration complex subunit RuvB, found in Parafrankia sp. (strain EAN1pec).